Reading from the N-terminus, the 147-residue chain is MRDNTIGSLIWLRLIRFTNQSNQMSNEFLKRFDLTTAQFDVLLQIRTYQPLTQMELAEKVTVTQGGISRMLTRLEKEGYIVRKQDWKTKTISLTEQGEAALERALPEQLAFQSSFFDDVLNEEEQKMLYELMTKVHKHSEKKELPQE.

The region spanning 1 to 137 is the HTH marR-type domain; the sequence is MRDNTIGSLI…LYELMTKVHK (137 aa). A DNA-binding region (H-T-H motif) is located at residues 53–76; it reads QMELAEKVTVTQGGISRMLTRLEK.

This is an uncharacterized protein from Bacillus cereus (strain ATCC 10987 / NRS 248).